A 368-amino-acid polypeptide reads, in one-letter code: UDP-N-acetylglucosamine--N-acetylmuramyl-(pentapeptide) pyrophosphoryl-undecaprenol N-acetylglucosamine transferase (368 aa).

Residues 16-18 (TGG), Asn130, Arg171, Ser197, and Gln296 contribute to the UDP-N-acetyl-alpha-D-glucosamine site.

The protein belongs to the glycosyltransferase 28 family. MurG subfamily.

Its subcellular location is the cell inner membrane. It carries out the reaction di-trans,octa-cis-undecaprenyl diphospho-N-acetyl-alpha-D-muramoyl-L-alanyl-D-glutamyl-meso-2,6-diaminopimeloyl-D-alanyl-D-alanine + UDP-N-acetyl-alpha-D-glucosamine = di-trans,octa-cis-undecaprenyl diphospho-[N-acetyl-alpha-D-glucosaminyl-(1-&gt;4)]-N-acetyl-alpha-D-muramoyl-L-alanyl-D-glutamyl-meso-2,6-diaminopimeloyl-D-alanyl-D-alanine + UDP + H(+). The protein operates within cell wall biogenesis; peptidoglycan biosynthesis. Cell wall formation. Catalyzes the transfer of a GlcNAc subunit on undecaprenyl-pyrophosphoryl-MurNAc-pentapeptide (lipid intermediate I) to form undecaprenyl-pyrophosphoryl-MurNAc-(pentapeptide)GlcNAc (lipid intermediate II). The chain is UDP-N-acetylglucosamine--N-acetylmuramyl-(pentapeptide) pyrophosphoryl-undecaprenol N-acetylglucosamine transferase from Acidiphilium cryptum (strain JF-5).